Reading from the N-terminus, the 432-residue chain is Phosphomethylpyrimidine synthase (432 aa).

Residues N66, M95, Y124, H163, 185–187 (SRG), 226–229 (DGLR), and E265 contribute to the substrate site. H269 is a Zn(2+) binding site. Y292 serves as a coordination point for substrate. H333 provides a ligand contact to Zn(2+). C409, C412, and C416 together coordinate [4Fe-4S] cluster.

The protein belongs to the ThiC family. [4Fe-4S] cluster is required as a cofactor.

The enzyme catalyses 5-amino-1-(5-phospho-beta-D-ribosyl)imidazole + S-adenosyl-L-methionine = 4-amino-2-methyl-5-(phosphooxymethyl)pyrimidine + CO + 5'-deoxyadenosine + formate + L-methionine + 3 H(+). The protein operates within cofactor biosynthesis; thiamine diphosphate biosynthesis. In terms of biological role, catalyzes the synthesis of the hydroxymethylpyrimidine phosphate (HMP-P) moiety of thiamine from aminoimidazole ribotide (AIR) in a radical S-adenosyl-L-methionine (SAM)-dependent reaction. The sequence is that of Phosphomethylpyrimidine synthase from Thermoanaerobacter pseudethanolicus (strain ATCC 33223 / 39E) (Clostridium thermohydrosulfuricum).